A 639-amino-acid chain; its full sequence is 1-deoxy-D-xylulose-5-phosphate synthase 1 (639 aa).

Residues His79 and 120–122 (AHS) contribute to the thiamine diphosphate site. Residue Asp155 coordinates Mg(2+). Thiamine diphosphate is bound by residues 156 to 157 (GA), Asn184, Tyr293, and Glu373. A Mg(2+)-binding site is contributed by Asn184.

It belongs to the transketolase family. DXPS subfamily. As to quaternary structure, homodimer. Mg(2+) is required as a cofactor. Requires thiamine diphosphate as cofactor.

The catalysed reaction is D-glyceraldehyde 3-phosphate + pyruvate + H(+) = 1-deoxy-D-xylulose 5-phosphate + CO2. It functions in the pathway metabolic intermediate biosynthesis; 1-deoxy-D-xylulose 5-phosphate biosynthesis; 1-deoxy-D-xylulose 5-phosphate from D-glyceraldehyde 3-phosphate and pyruvate: step 1/1. In terms of biological role, catalyzes the acyloin condensation reaction between C atoms 2 and 3 of pyruvate and glyceraldehyde 3-phosphate to yield 1-deoxy-D-xylulose-5-phosphate (DXP). This is 1-deoxy-D-xylulose-5-phosphate synthase 1 from Jannaschia sp. (strain CCS1).